The primary structure comprises 378 residues: C-C chemokine receptor type 7 (378 aa).

Residues 1–24 (MDPGKPRKNVLVVALLVIFQVCFC) form the signal peptide. Residues 25–59 (QDEVTDDYIGENTTVDYTLYESVCFKKDVRNFKAW) lie on the Extracellular side of the membrane. A glycan (N-linked (GlcNAc...) asparagine) is linked at N36. The chain crosses the membrane as a helical span at residues 60–86 (FLPLMYSVICFVGLLGNGLVILTYIYF). At 87–95 (KRLKTMTDT) the chain is on the cytoplasmic side. Residues 96 to 116 (YLLNLAVADILFLLILPFWAY) form a helical membrane-spanning segment. The Extracellular portion of the chain corresponds to 117–130 (SEAKSWIFGVYLCK). C129 and C210 are joined by a disulfide. A helical membrane pass occupies residues 131–152 (GIFGIYKLSFFSGMLLLLCISI). Over 153 to 170 (DRYVAIVQAVSAHRHRAR) the chain is Cytoplasmic. Residues 171-191 (VLLISKLSCVGIWMLALFLSI) form a helical membrane-spanning segment. The Extracellular segment spans residues 192–219 (PELLYSGLQKNSGEDTLRCSLVSAQVEA). A helical transmembrane segment spans residues 220–247 (LITIQVAQMVFGFLVPMLAMSFCYLIII). At 248–263 (RTLLQARNFERNKAIK) the chain is on the cytoplasmic side. The chain crosses the membrane as a helical span at residues 264-289 (VIIAVVVVFIVFQLPYNGVVLAQTVA). Topologically, residues 290–313 (NFNITNSSCETSKQLNIAYDVTYS) are extracellular. A helical membrane pass occupies residues 314–331 (LASVRCCVNPFLYAFIGV). At 332–378 (KFRSDLFKLFKDLGCLSQERLRHWSSCRHVRNASVSMEAETTTTFSP) the chain is on the cytoplasmic side.

This sequence belongs to the G-protein coupled receptor 1 family.

It localises to the cell membrane. Receptor for the MIP-3-beta chemokine. The polypeptide is C-C chemokine receptor type 7 (Ccr7) (Mus musculus (Mouse)).